Here is a 557-residue protein sequence, read N- to C-terminus: Formate--tetrahydrofolate ligase (557 aa).

65 to 72 (TPAGEGKT) contacts ATP.

Belongs to the formate--tetrahydrofolate ligase family.

It catalyses the reaction (6S)-5,6,7,8-tetrahydrofolate + formate + ATP = (6R)-10-formyltetrahydrofolate + ADP + phosphate. The protein operates within one-carbon metabolism; tetrahydrofolate interconversion. This Acidiphilium cryptum (strain JF-5) protein is Formate--tetrahydrofolate ligase.